The following is a 984-amino-acid chain: Translation initiation factor IF-2 (984 aa).

Disordered regions lie at residues 92–267 (KKRT…ERRR) and 280–392 (MNAP…EEHV). Over residues 104 to 123 (PATPEVQPVAEAPAAAPAAP) the composition is skewed to low complexity. Residues 124 to 177 (RIDEAELARREEEARRQAELIRRQEEELAEKRRLREEAEAREREQAEKAERAEQ) are compositionally biased toward basic and acidic residues. The segment covering 193–235 (DAAAAAPAKEAAKPAAAPVAAAAAAAEQQAADTKLAAQTAATQ) has biased composition (low complexity). Basic and acidic residues-rich tracts occupy residues 236–267 (AKED…ERRR) and 291–302 (KAPEKPQPEKAA). Positions 310–335 (PAAPAARPGAPAAPGAAAAPGAAGAG) are enriched in low complexity. Basic and acidic residues predominate over residues 351–361 (PAKKKEIKTRG). Residues 363 to 375 (ASGGVGRGNWRGG) are compositionally biased toward gly residues. Over residues 381–392 (GSNDRGGHEEHV) the composition is skewed to basic and acidic residues. Residues 484–653 (PRAPVVTVMG…LLQAEVLELK (170 aa)) enclose the tr-type G domain. Residues 493–500 (GHVDHGKT) form a G1 region. Residue 493–500 (GHVDHGKT) coordinates GTP. The G2 stretch occupies residues 518–522 (GITQH). The interval 539–542 (DTPG) is G3. GTP contacts are provided by residues 539-543 (DTPGH) and 593-596 (NKID). The interval 593–596 (NKID) is G4. Residues 629–631 (SAK) are G5.

It belongs to the TRAFAC class translation factor GTPase superfamily. Classic translation factor GTPase family. IF-2 subfamily.

The protein resides in the cytoplasm. Functionally, one of the essential components for the initiation of protein synthesis. Protects formylmethionyl-tRNA from spontaneous hydrolysis and promotes its binding to the 30S ribosomal subunits. Also involved in the hydrolysis of GTP during the formation of the 70S ribosomal complex. This is Translation initiation factor IF-2 from Variovorax paradoxus (strain S110).